The primary structure comprises 356 residues: Phosphoserine aminotransferase (356 aa).

L-glutamate is bound at residue Arg41. Residues 75–76 (AS), Trp99, Thr147, Asp166, and Gln189 contribute to the pyridoxal 5'-phosphate site. An N6-(pyridoxal phosphate)lysine modification is found at Lys190. 231 to 232 (NT) contributes to the pyridoxal 5'-phosphate binding site.

The protein belongs to the class-V pyridoxal-phosphate-dependent aminotransferase family. SerC subfamily. Homodimer. Pyridoxal 5'-phosphate is required as a cofactor.

It is found in the cytoplasm. It catalyses the reaction O-phospho-L-serine + 2-oxoglutarate = 3-phosphooxypyruvate + L-glutamate. It carries out the reaction 4-(phosphooxy)-L-threonine + 2-oxoglutarate = (R)-3-hydroxy-2-oxo-4-phosphooxybutanoate + L-glutamate. Its pathway is amino-acid biosynthesis; L-serine biosynthesis; L-serine from 3-phospho-D-glycerate: step 2/3. It functions in the pathway cofactor biosynthesis; pyridoxine 5'-phosphate biosynthesis; pyridoxine 5'-phosphate from D-erythrose 4-phosphate: step 3/5. Catalyzes the reversible conversion of 3-phosphohydroxypyruvate to phosphoserine and of 3-hydroxy-2-oxo-4-phosphonooxybutanoate to phosphohydroxythreonine. The protein is Phosphoserine aminotransferase of Phocaeicola vulgatus (strain ATCC 8482 / DSM 1447 / JCM 5826 / CCUG 4940 / NBRC 14291 / NCTC 11154) (Bacteroides vulgatus).